The primary structure comprises 188 residues: Gamma-glutamylcyclotransferase (188 aa).

Residue 19-22 (YFAY) coordinates substrate. Catalysis depends on Glu-98, which acts as the Proton acceptor. Ser-173 is modified (phosphoserine).

This sequence belongs to the gamma-glutamylcyclotransferase family. Homodimer.

It catalyses the reaction an alpha-(gamma-L-glutamyl)-L-amino acid = 5-oxo-L-proline + an L-alpha-amino acid. In terms of biological role, catalyzes the formation of 5-oxoproline from gamma-glutamyl dipeptides and may play a significant role in glutathione homeostasis. Induces release of cytochrome c from mitochondria with resultant induction of apoptosis. The polypeptide is Gamma-glutamylcyclotransferase (Ggct) (Mus musculus (Mouse)).